Consider the following 155-residue polypeptide: MPHSNISRAPRQHLTERVLQAKTAKNLTWAGLAEGTGLSVVYVTAALLGQHPLPQAVAEVVAERLGLDRDAVAELQTIPLRGNVEDVSSDPTIYRFHEMVQVYGTTLKALVHEQFGDGIISAINFKLDIKKVDDPEGGERAVITLDGKFLPYKPF.

Residues arginine 95, glutamate 98, and serine 121 contribute to the active site.

The protein belongs to the cyanase family.

The enzyme catalyses cyanate + hydrogencarbonate + 3 H(+) = NH4(+) + 2 CO2. Functionally, catalyzes the reaction of cyanate with bicarbonate to produce ammonia and carbon dioxide. This chain is Cyanate hydratase, found in Pseudomonas syringae pv. syringae (strain B728a).